The sequence spans 674 residues: DNA ligase (674 aa).

NAD(+) is bound by residues 35–39, 84–85, and Glu118; these read DYDFD and SL. Lys120 serves as the catalytic N6-AMP-lysine intermediate. Residues Arg141, Glu184, Lys297, and Lys321 each contribute to the NAD(+) site. Zn(2+) contacts are provided by Cys415, Cys418, Cys433, and Cys439. One can recognise a BRCT domain in the interval 598–674; sequence LVNTNFEGLT…ITEDEFDALL (77 aa).

The protein belongs to the NAD-dependent DNA ligase family. LigA subfamily. Requires Mg(2+) as cofactor. It depends on Mn(2+) as a cofactor.

It carries out the reaction NAD(+) + (deoxyribonucleotide)n-3'-hydroxyl + 5'-phospho-(deoxyribonucleotide)m = (deoxyribonucleotide)n+m + AMP + beta-nicotinamide D-nucleotide.. In terms of biological role, DNA ligase that catalyzes the formation of phosphodiester linkages between 5'-phosphoryl and 3'-hydroxyl groups in double-stranded DNA using NAD as a coenzyme and as the energy source for the reaction. It is essential for DNA replication and repair of damaged DNA. The polypeptide is DNA ligase (Chlorobium phaeovibrioides (strain DSM 265 / 1930) (Prosthecochloris vibrioformis (strain DSM 265))).